Here is a 577-residue protein sequence, read N- to C-terminus: Outer spore wall assembly protein SHE10 (577 aa).

The signal sequence occupies residues 1-23 (MGKLIKLITTLTVLVSLLQYCCE). Coiled coils occupy residues 379 to 416 (NETR…ENVE) and 513 to 561 (ILRS…EEDV). Over residues 525–545 (RERKERERKEREKAAAEEFQR) the composition is skewed to basic and acidic residues. The tract at residues 525–577 (RERKERERKEREKAAAEEFQRQQELLRQQEEEDEEDVSYTSTSTITTTTTMTL) is disordered. The segment covering 562-577 (SYTSTSTITTTTTMTL) has biased composition (low complexity).

The protein belongs to the SHE10 family. Component of the mitochondria-localized RNase mitochondrial RNA-processing (RNase MRP) composed of one single RNA encoded by the NME1 gene and at least 31 proteins. Absent in the nucleus-localized RNase MRP (NuMRP).

The protein localises to the mitochondrion. Involved in spore wall assembly. May be a component of the mitochondrial RNase MRP (MtMRP), a ribonucleoprotein endoribonuclease involved in the cleaving RNA transcripts to generate primers for DNA replication in mitochondria. This chain is Outer spore wall assembly protein SHE10, found in Saccharomyces cerevisiae (strain YJM789) (Baker's yeast).